The following is a 330-amino-acid chain: Malate dehydrogenase (330 aa).

15–21 (GGTGQIA) provides a ligand contact to NAD(+). 2 residues coordinate substrate: R96 and R102. Residues N109, Q116, and 133 to 135 (VGN) contribute to the NAD(+) site. Substrate contacts are provided by N135 and R166. H191 (proton acceptor) is an active-site residue.

This sequence belongs to the LDH/MDH superfamily. MDH type 2 family.

The catalysed reaction is (S)-malate + NAD(+) = oxaloacetate + NADH + H(+). In terms of biological role, catalyzes the reversible oxidation of malate to oxaloacetate. The chain is Malate dehydrogenase from Chlamydia caviae (strain ATCC VR-813 / DSM 19441 / 03DC25 / GPIC) (Chlamydophila caviae).